Consider the following 339-residue polypeptide: Inositol 2-dehydrogenase (339 aa).

The protein belongs to the Gfo/Idh/MocA family. As to quaternary structure, homotetramer.

It catalyses the reaction myo-inositol + NAD(+) = scyllo-inosose + NADH + H(+). In terms of biological role, involved in the oxidation of myo-inositol (MI) to 2-keto-myo-inositol (2KMI or 2-inosose). This is Inositol 2-dehydrogenase from Leifsonia xyli subsp. xyli (strain CTCB07).